Consider the following 100-residue polypeptide: Small ribosomal subunit protein uS14c (100 aa).

The protein belongs to the universal ribosomal protein uS14 family. As to quaternary structure, part of the 30S ribosomal subunit.

The protein resides in the plastid. Its function is as follows. Binds 16S rRNA, required for the assembly of 30S particles. The chain is Small ribosomal subunit protein uS14c from Aneura mirabilis (Parasitic liverwort).